A 532-amino-acid chain; its full sequence is MKESNLSELLNRRLALLGERANLSLLEQCLHGIERECLRVTGEGRLAQTPHPEELGSALTNEQITTDYSESLLEFITPALKDPADTLASLDKIHRFAYSKLGNEYLWSPSMPCPLPAEEDIPIAYYGTSNIGQLKYVYRKGLALRYGKTMQCIAGIHYNFSLPEQLWPLLKQAEGFVGTDRDYQSSAYIALIRNFRRYSWLLMYLFGASPALDAGFLRGRSHQLEQLDAETLYLPYATSLRMSDLGYQSKAQAGLTPCYNDLNSYTDSLRKAVATPYAPYVEVGTHKDGEWVQLNTNILQIENEYYSNIRPKRVTYTGERPIQALMARGIQYVEVRCLDINPFLPLGIDIQEARFLDAFLLYCALNDSPLFENNECGNATSNFLAVVKEGRRPGLQLQRQGQPVEMKEWAAQLLEQIAPLAALLDQSHGSDVHSKALDAQLAKVKDSSLTPSAQVLAAMSEHKESFTQFSLRQSQAHAEYFRSQTLSKEEQAAFEEAARKSLEQQTELEQNEVGDFDVFVGAYQASILAISN.

This sequence belongs to the glutamate--cysteine ligase type 1 family. Type 1 subfamily.

The enzyme catalyses L-cysteine + L-glutamate + ATP = gamma-L-glutamyl-L-cysteine + ADP + phosphate + H(+). Its pathway is sulfur metabolism; glutathione biosynthesis; glutathione from L-cysteine and L-glutamate: step 1/2. This Pseudomonas fluorescens (strain ATCC BAA-477 / NRRL B-23932 / Pf-5) protein is Glutamate--cysteine ligase.